We begin with the raw amino-acid sequence, 168 residues long: Cyclin-dependent kinase 4 inhibitor C (168 aa).

ANK repeat units follow at residues 4–33 (PWGN…NVNA), 37–65 (FGRT…NPNL), 69–98 (TGFA…DVNI), 102–132 (EGNL…NVGH), and 136–165 (KGDT…GGAT).

Belongs to the CDKN2 cyclin-dependent kinase inhibitor family. Heterodimer of p18 with CDK6.

Its function is as follows. Interacts strongly with CDK6, weakly with CDK4. Inhibits cell growth and proliferation with a correlated dependence on endogenous retinoblastoma protein RB. In Mus musculus (Mouse), this protein is Cyclin-dependent kinase 4 inhibitor C (Cdkn2c).